A 310-amino-acid chain; its full sequence is Aspartate carbamoyltransferase catalytic subunit (310 aa).

The carbamoyl phosphate site is built by arginine 58 and threonine 59. Lysine 86 is a binding site for L-aspartate. Carbamoyl phosphate is bound by residues arginine 108, histidine 137, and glutamine 140. L-aspartate is bound by residues arginine 170 and arginine 225. Positions 264 and 265 each coordinate carbamoyl phosphate.

The protein belongs to the aspartate/ornithine carbamoyltransferase superfamily. ATCase family. Heterododecamer (2C3:3R2) of six catalytic PyrB chains organized as two trimers (C3), and six regulatory PyrI chains organized as three dimers (R2).

It catalyses the reaction carbamoyl phosphate + L-aspartate = N-carbamoyl-L-aspartate + phosphate + H(+). It participates in pyrimidine metabolism; UMP biosynthesis via de novo pathway; (S)-dihydroorotate from bicarbonate: step 2/3. Its function is as follows. Catalyzes the condensation of carbamoyl phosphate and aspartate to form carbamoyl aspartate and inorganic phosphate, the committed step in the de novo pyrimidine nucleotide biosynthesis pathway. The chain is Aspartate carbamoyltransferase catalytic subunit from Coxiella burnetii (strain CbuK_Q154) (Coxiella burnetii (strain Q154)).